The sequence spans 398 residues: Cyclin-dependent kinase D-1 (398 aa).

Positions 11-291 (YLKREVLGQG…IQQALKHRYF (281 aa)) constitute a Protein kinase domain. ATP-binding positions include 17–25 (LGQGTYGVV) and Lys40. Tyr22 is subject to Phosphotyrosine. Catalysis depends on Asp133, which acts as the Proton acceptor. At Ser160 the chain carries Phosphoserine. Phosphothreonine is present on Thr166. Residues 296–318 (SPTDPLKLPRPVSKQDAKSSDSK) form a disordered region. The segment covering 308–318 (SKQDAKSSDSK) has biased composition (basic and acidic residues).

It belongs to the protein kinase superfamily. CMGC Ser/Thr protein kinase family. CDC2/CDKX subfamily. Autophosphorylated. As to expression, expressed at low levels in suspension cell culture, but not in plant organs.

The protein localises to the nucleus. It carries out the reaction L-seryl-[protein] + ATP = O-phospho-L-seryl-[protein] + ADP + H(+). The catalysed reaction is L-threonyl-[protein] + ATP = O-phospho-L-threonyl-[protein] + ADP + H(+). It catalyses the reaction [DNA-directed RNA polymerase] + ATP = phospho-[DNA-directed RNA polymerase] + ADP + H(+). The chain is Cyclin-dependent kinase D-1 (CDKD-1) from Arabidopsis thaliana (Mouse-ear cress).